Reading from the N-terminus, the 356-residue chain is MFS-type transporter tazK (356 aa).

9 helical membrane-spanning segments follow: residues Leu-12–His-32, Phe-42–Phe-62, Gly-69–Thr-89, Met-102–Leu-122, Ile-178–Val-198, Gly-211–Phe-231, Leu-257–Thr-277, Ile-288–Tyr-308, and Ala-320–Pro-340.

Belongs to the major facilitator superfamily. CAR1 family.

Its subcellular location is the membrane. Functionally, MFS-type transporter; part of the gene cluster that mediates the biosynthesis of azaterrilone A and other azaphilones, a class of fungal metabolites characterized by a highly oxygenated pyrano-quinone bicyclic core and exhibiting a broad range of bioactivities. This chain is MFS-type transporter tazK, found in Aspergillus terreus (strain NIH 2624 / FGSC A1156).